Reading from the N-terminus, the 420-residue chain is Dynein axonemal assembly factor 4 (420 aa).

Residues 3 to 87 form the CS domain; the sequence is LQVSDYSWQQ…KEAAMWETLS (85 aa). The interval 7–103 is mediates interaction with ESR1 and STUB1; the sequence is DYSWQQTKTA…EMMQRIREKS (97 aa). 3 TPR repeats span residues 290–323, 324–357, and 366–399; these read PEWL…NNKM, PLLY…LMPP, and MKAH…DPSN.

Interacts with ZMYND10. Interacts with STUB1. Interacts with ESR1 and ESR2. Interacts with DNAAF2. Interacts with CCT3, CCT4, CCT5 and CCT8. Interacts with DNAAF6/PIH1D3.

It localises to the nucleus. Its subcellular location is the cytoplasm. The protein localises to the cell projection. It is found in the neuron projection. The protein resides in the dynein axonemal particle. Involved in neuronal migration during development of the cerebral neocortex. May regulate the stability and proteasomal degradation of the estrogen receptors that play an important role in neuronal differentiation, survival and plasticity. Axonemal dynein assembly factor required for ciliary motility. The sequence is that of Dynein axonemal assembly factor 4 from Pan paniscus (Pygmy chimpanzee).